A 330-amino-acid chain; its full sequence is Nitrilase 3 (330 aa).

Residues 4–273 enclose the CN hydrolase domain; the sequence is VKAAAVQISP…EGEVIVDLDF (270 aa). Glu44 (proton acceptor) is an active-site residue. Residue Lys128 is the Proton donor of the active site. Catalysis depends on Cys162, which acts as the Nucleophile. The disordered stretch occupies residues 310 to 330; sequence RAAHPVSGAEQGPEDLRTPAA.

This sequence belongs to the carbon-nitrogen hydrolase superfamily. Nitrilase family.

The catalysed reaction is a nitrile + 2 H2O = a carboxylate + NH4(+). Its function is as follows. Nitrilases catalyze the mild hydrolytic conversion of organonitriles directly to the corresponding carboxylic acids. The polypeptide is Nitrilase 3 (Unknown prokaryotic organism).